An 845-amino-acid chain; its full sequence is Beta-glucosidase B (845 aa).

N-linked (GlcNAc...) asparagine glycosylation occurs at N202. D230 is an active-site residue. N-linked (GlcNAc...) asparagine glycosylation occurs at N235. The PA14 domain occupies 406-557 (EGQPGWTLDF…HNRDLLSEAV (152 aa)). N-linked (GlcNAc...) asparagine glycans are attached at residues N591, N612, and N794.

It belongs to the glycosyl hydrolase 3 family.

It carries out the reaction Hydrolysis of terminal, non-reducing beta-D-glucosyl residues with release of beta-D-glucose.. It participates in glycan metabolism; cellulose degradation. Beta-glucosidases are one of a number of cellulolytic enzymes involved in the degradation of cellulosic biomass. Catalyzes the last step releasing glucose from the inhibitory cellobiose. This Emericella nidulans (strain FGSC A4 / ATCC 38163 / CBS 112.46 / NRRL 194 / M139) (Aspergillus nidulans) protein is Beta-glucosidase B (bglB).